Here is a 380-residue protein sequence, read N- to C-terminus: Succinyl-diaminopimelate desuccinylase (380 aa).

Zn(2+) is bound at residue histidine 69. Aspartate 71 is a catalytic residue. Aspartate 102 serves as a coordination point for Zn(2+). The Proton acceptor role is filled by glutamate 135. Zn(2+)-binding residues include glutamate 136, glutamate 164, and histidine 353.

Belongs to the peptidase M20A family. DapE subfamily. As to quaternary structure, homodimer. Zn(2+) serves as cofactor. It depends on Co(2+) as a cofactor.

It carries out the reaction N-succinyl-(2S,6S)-2,6-diaminopimelate + H2O = (2S,6S)-2,6-diaminopimelate + succinate. It functions in the pathway amino-acid biosynthesis; L-lysine biosynthesis via DAP pathway; LL-2,6-diaminopimelate from (S)-tetrahydrodipicolinate (succinylase route): step 3/3. In terms of biological role, catalyzes the hydrolysis of N-succinyl-L,L-diaminopimelic acid (SDAP), forming succinate and LL-2,6-diaminopimelate (DAP), an intermediate involved in the bacterial biosynthesis of lysine and meso-diaminopimelic acid, an essential component of bacterial cell walls. This chain is Succinyl-diaminopimelate desuccinylase, found in Cereibacter sphaeroides (strain ATCC 17023 / DSM 158 / JCM 6121 / CCUG 31486 / LMG 2827 / NBRC 12203 / NCIMB 8253 / ATH 2.4.1.) (Rhodobacter sphaeroides).